The sequence spans 230 residues: tRNA (guanine-N(7)-)-methyltransferase (230 aa).

Residues Glu61, Glu86, Asp113, and Asp135 each contribute to the S-adenosyl-L-methionine site. Asp135 is an active-site residue. Substrate is bound by residues Lys139, Asp171, and 209 to 212 (TRYE).

It belongs to the class I-like SAM-binding methyltransferase superfamily. TrmB family.

It carries out the reaction guanosine(46) in tRNA + S-adenosyl-L-methionine = N(7)-methylguanosine(46) in tRNA + S-adenosyl-L-homocysteine. Its pathway is tRNA modification; N(7)-methylguanine-tRNA biosynthesis. Functionally, catalyzes the formation of N(7)-methylguanine at position 46 (m7G46) in tRNA. The sequence is that of tRNA (guanine-N(7)-)-methyltransferase from Rhizobium etli (strain ATCC 51251 / DSM 11541 / JCM 21823 / NBRC 15573 / CFN 42).